A 377-amino-acid polypeptide reads, in one-letter code: Chorismate synthase (377 aa).

NADP(+) is bound by residues Arg48 and Arg54. FMN contacts are provided by residues 125-127 (RSS), 238-239 (NA), Gly278, 293-297 (KPTSS), and Arg319.

It belongs to the chorismate synthase family. In terms of assembly, homotetramer. Requires FMNH2 as cofactor.

The catalysed reaction is 5-O-(1-carboxyvinyl)-3-phosphoshikimate = chorismate + phosphate. It participates in metabolic intermediate biosynthesis; chorismate biosynthesis; chorismate from D-erythrose 4-phosphate and phosphoenolpyruvate: step 7/7. Its function is as follows. Catalyzes the anti-1,4-elimination of the C-3 phosphate and the C-6 proR hydrogen from 5-enolpyruvylshikimate-3-phosphate (EPSP) to yield chorismate, which is the branch point compound that serves as the starting substrate for the three terminal pathways of aromatic amino acid biosynthesis. This reaction introduces a second double bond into the aromatic ring system. In Aromatoleum aromaticum (strain DSM 19018 / LMG 30748 / EbN1) (Azoarcus sp. (strain EbN1)), this protein is Chorismate synthase.